The chain runs to 199 residues: Thymidylate kinase (199 aa).

An ATP-binding site is contributed by 7-14; that stretch reads GIDGSGKS.

This sequence belongs to the thymidylate kinase family.

It carries out the reaction dTMP + ATP = dTDP + ADP. In terms of biological role, phosphorylation of dTMP to form dTDP in both de novo and salvage pathways of dTTP synthesis. The chain is Thymidylate kinase from Neorickettsia sennetsu (strain ATCC VR-367 / Miyayama) (Ehrlichia sennetsu).